Here is a 669-residue protein sequence, read N- to C-terminus: Acetyl-coenzyme A synthetase (669 aa).

Residues 211-214 (RGGK) and Thr-329 contribute to the CoA site. Residues 404-406 (GEP), 428-433 (DTYWQT), Asp-519, and Arg-534 contribute to the ATP site. Ser-542 serves as a coordination point for CoA. Arg-545 is a binding site for ATP. Arg-602 serves as a coordination point for CoA.

The protein belongs to the ATP-dependent AMP-binding enzyme family.

The catalysed reaction is acetate + ATP + CoA = acetyl-CoA + AMP + diphosphate. The protein operates within ketone degradation; acetoin degradation. It functions in the pathway antibiotic biosynthesis; penicillin biosynthesis. The protein is Acetyl-coenzyme A synthetase (facA) of Penicillium chrysogenum (Penicillium notatum).